The chain runs to 202 residues: MNLEQIYKDCGAYLEGHFLLSSGKHSQFYLQSAKVLEDPKLAAKLCNELAKIIASYKIEFDSICSPALGGILAGYELARACSKRFIFTERVNKEMTLRRGFEVKKGEKFIICEDIITTGGSALESAKIIESLGGIVVGFAALANRGFCAVENLKSPRKDNAKLPENLPLFTLGNFEFEIYDETNCPLCKKGSKAIKPGSRGN.

5-phospho-alpha-D-ribose 1-diphosphate-binding positions include Lys-93 and 113 to 121 (EDIITTGGS). The orotate site is built by Thr-117 and Arg-145.

The protein belongs to the purine/pyrimidine phosphoribosyltransferase family. PyrE subfamily. As to quaternary structure, homodimer. Requires Mg(2+) as cofactor.

It carries out the reaction orotidine 5'-phosphate + diphosphate = orotate + 5-phospho-alpha-D-ribose 1-diphosphate. It functions in the pathway pyrimidine metabolism; UMP biosynthesis via de novo pathway; UMP from orotate: step 1/2. Catalyzes the transfer of a ribosyl phosphate group from 5-phosphoribose 1-diphosphate to orotate, leading to the formation of orotidine monophosphate (OMP). This is Orotate phosphoribosyltransferase from Campylobacter jejuni subsp. jejuni serotype O:23/36 (strain 81-176).